The chain runs to 225 residues: MKYIVGDYLYLGSKENEINNNFTWLMRYLYREFVLDYDKMKKIYGHIESDNNYDDIYNDNNFRDILYFEPNLMDDDKYIYKYENNINLDNDIDDIVFYEEIKNLILELQVYLSEKTTKRLRVMGITKLKLVNDFGINKYVGGIRDLDWKLHFWPEYTIVNDNYITLHELIIACFKIKSHKFETYHEYFMKFDEFHVFSCVKKKDGLNTMCKEIIAFVNFNHYSSL.

Belongs to the mimivirus L31/R44 family.

This is an uncharacterized protein from Acanthamoeba polyphaga (Amoeba).